Consider the following 152-residue polypeptide: MSDVQERLKKLGASARIGIGKGTPRRKVKRAPARSAGDDKKLQATLKKVNVQPIQAIEEVNMFKSDGNVIHFAAPKVHAAVPANTFAIYGNGEDKELTELVPGILNQLGPDSLASLRKLAESYQNMQKNEKDAEEDDIPDLVAGENFESKVE.

2 disordered regions span residues 19-39 and 125-152; these read IGKG…AGDD and NMQK…SKVE. The segment covering 23 to 32 has biased composition (basic residues); the sequence is TPRRKVKRAP. An NAC-A/B domain is found at 36-101; the sequence is AGDDKKLQAT…GEDKELTELV (66 aa).

This sequence belongs to the NAC-beta family. Part of the nascent polypeptide-associated complex (NAC), consisting of npc-1/egd2 and npc-2/egd1. NAC associates with ribosomes via npc-2/egd1.

Its subcellular location is the cytoplasm. It localises to the nucleus. Functionally, component of the nascent polypeptide-associated complex (NAC), a dynamic component of the ribosomal exit tunnel, protecting the emerging polypeptides from interaction with other cytoplasmic proteins to ensure appropriate nascent protein targeting. The NAC complex also promotes mitochondrial protein import by enhancing productive ribosome interactions with the outer mitochondrial membrane and blocks the inappropriate interaction of ribosomes translating non-secretory nascent polypeptides with translocation sites in the membrane of the endoplasmic reticulum. Npc-2/egd1 may act as a transcription factor that exert a negative effect on the expression of several genes that are transcribed by RNA polymerase II. This is Nascent polypeptide-associated complex subunit beta (npc-2) from Neurospora crassa (strain ATCC 24698 / 74-OR23-1A / CBS 708.71 / DSM 1257 / FGSC 987).